A 640-amino-acid polypeptide reads, in one-letter code: 1,4-alpha-glucan branching enzyme GlgB (640 aa).

Asp-318 serves as the catalytic Nucleophile. The Proton donor role is filled by Glu-371.

This sequence belongs to the glycosyl hydrolase 13 family. GlgB subfamily. Monomer.

It catalyses the reaction Transfers a segment of a (1-&gt;4)-alpha-D-glucan chain to a primary hydroxy group in a similar glucan chain.. The protein operates within glycan biosynthesis; glycogen biosynthesis. In terms of biological role, catalyzes the formation of the alpha-1,6-glucosidic linkages in glycogen by scission of a 1,4-alpha-linked oligosaccharide from growing alpha-1,4-glucan chains and the subsequent attachment of the oligosaccharide to the alpha-1,6 position. The sequence is that of 1,4-alpha-glucan branching enzyme GlgB from Francisella tularensis subsp. novicida (strain U112).